The primary structure comprises 123 residues: KxDL motif-containing protein LO9-177 (123 aa).

The short motif at 78–81 (KDDL) is the KxDL element.

Belongs to the KXD1 family. As to quaternary structure, homodimer. Component of a nuclear cell elongation controlling complex made of ILI5/BUL1, LO9-177 and BC1. Binds directly to ILI5/BUL1, ILI4/BU1, BUL2 and BUL3. Binds to BC1 in the nucleus. Interacts with BCL1.

It localises to the nucleus. The protein resides in the cytoplasm. Contributes, together with ILI5/BUL1 and BC1, to the promotion of leaf inclination and grain size by modulating cell elongation. The sequence is that of KxDL motif-containing protein LO9-177 from Oryza sativa subsp. indica (Rice).